The primary structure comprises 225 residues: Ribonuclease 3 (225 aa).

The region spanning 7 to 132 is the RNase III domain; it reads MKAFEARLGY…VIAAVYRDGG (126 aa). E45 is a binding site for Mg(2+). The active site involves D49. D118 and E121 together coordinate Mg(2+). Residue E121 is part of the active site. Positions 157–225 constitute a DRBM domain; the sequence is DAKTALQEWA…AARKLLDSLD (69 aa).

It belongs to the ribonuclease III family. As to quaternary structure, homodimer. It depends on Mg(2+) as a cofactor.

The protein localises to the cytoplasm. The enzyme catalyses Endonucleolytic cleavage to 5'-phosphomonoester.. Functionally, digests double-stranded RNA. Involved in the processing of primary rRNA transcript to yield the immediate precursors to the large and small rRNAs (23S and 16S). Processes some mRNAs, and tRNAs when they are encoded in the rRNA operon. Processes pre-crRNA and tracrRNA of type II CRISPR loci if present in the organism. In Ruegeria pomeroyi (strain ATCC 700808 / DSM 15171 / DSS-3) (Silicibacter pomeroyi), this protein is Ribonuclease 3.